The following is an 821-amino-acid chain: Serine/threonine-protein kinase CTR1 (821 aa).

Disordered regions lie at residues 1–76 (MEMP…LNNQ) and 481–502 (NPGG…PSAN). Residues 14 to 25 (SQFSDDQVSVSV) show a composition bias toward low complexity. Over residues 35 to 49 (SLSSENRSNHNSGNT) the composition is skewed to polar residues. The Protein kinase domain maps to 551–809 (LNIKEKIGAG…TIMDLLRPLI (259 aa)). ATP is bound by residues 557 to 565 (IGAGSFGTV) and Lys-578. Asp-676 (proton acceptor) is an active-site residue.

It belongs to the protein kinase superfamily. TKL Ser/Thr protein kinase family. RAF subfamily. In terms of assembly, interacts with EIN2 (via C-terminus). As to expression, expressed in both seedlings and adult plants.

It catalyses the reaction L-seryl-[protein] + ATP = O-phospho-L-seryl-[protein] + ADP + H(+). It carries out the reaction L-threonyl-[protein] + ATP = O-phospho-L-threonyl-[protein] + ADP + H(+). Its activity is regulated as follows. Kinase activity is inhibited by C24:1-ceramide during hypoxia (e.g. submergences). In terms of biological role, acts as a negative regulator in the ethylene response pathway. Phosphorylates the cytosolic C-terminal domain of EIN2, preventing the signaling in the absence of ethylene. Interacts with C24:1-ceramide upon hypoxic conditions (e.g. submergences) to in turn regulate EIN2 endoplasmic reticulum (ER)-to-nucleus translocation and EIN3 stabilization. This chain is Serine/threonine-protein kinase CTR1, found in Arabidopsis thaliana (Mouse-ear cress).